Consider the following 512-residue polypeptide: mRNA export factor (512 aa).

A disordered region spans residues 1-242 (MATDIDMLID…PVPERKAPSA (242 aa)). A Nuclear export signal motif is present at residues 5-17 (IDMLIDLGLDLSD). S16 and S18 each carry phosphoserine; by host. Composition is skewed to acidic residues over residues 16–28 (SDSE…LERD) and 36–55 (PESD…EDPC). The interval 104 to 112 (VWSRLGTRR) is interaction with host ALYREF. The short motif at 110 to 138 (TRRSASPREPHGGKVARIQPPSTKAPHPR) is the Nuclear localization signal element. S113 carries the phosphoserine; by host modification. Positions 135 to 149 (PHPRGGRRGRRRGRG) are enriched in basic residues. Dimethylated arginine; by host is present on R138. The segment at 138–152 (RGGRRGRRRGRGRYG) is RGG-box. R148 bears the Omega-N-methylarginine; by host mark. At R150 the chain carries Dimethylated arginine; by host. Over residues 228-240 (ADGRAPVPERKAP) the composition is skewed to basic and acidic residues. Zn(2+) is bound by residues C400, H479, C483, and C488. Residues 400–488 (CYLKARGLCG…HRQECSSRVC (89 aa)) form a CHC2-type zinc finger.

This sequence belongs to the HHV-1 ICP27 protein family. In terms of assembly, interacts with host RBP1; this interaction facilitates the RNA polymerase recruitment to viral transcription sites. Interacts (via the RGG box) with host ALYREF/THOC4; this interaction recruits ALYREF to viral replication compartments and probably directs viral mRNA to the TAP/NFX1 pathway. Interacts (via the RGG box) with host SRPK1; this interaction relocalizes SRPK1 to the nucleus and seems to alter its activity. Interacts with ICP4; this interaction modulates ICP4 DNA-binding activity. Interacts with host NXF1; this interaction allows efficient export of HSV-1 early and late transcripts. Interacts with host IRF3; this interaction inhibits IRF3 phosphorylation and nuclear translocation. Post-translationally, methylated within the RGG box possibly by host PRMT1. When hypomethylated, ICP27 is exported to the cytoplasm earlier and more rapidly. Phosphorylated.

It localises to the host cytoplasm. The protein resides in the host nucleus. Functionally, multifunctional regulator of the expression of viral genes that contributes to the shutoff of host protein synthesis and mediates nuclear export of viral intronless mRNAs. Also stimulates translation of viral transcripts. Independently, plays a role in the regulation of virion release. Also plays a role in the inhibition of host innate immune response by targeting host IRF3 and thereby preventing production of beta-interferon. Silences the 3' splice site of the host promyelocytic leukemia (PML) intron 7a, thereby switching PML isoforms from PML-II to PML-V. This could be linked to the accelerated mRNA export induced by ICP27 which might not provide sufficient time for PML pre-mRNA to be spliced in the nucleus. Also suppresses splicing of the viral ICP34.5 mRNA, allowing the virus to express a variant form of ICP34.5. The sequence is that of mRNA export factor from Human herpesvirus 2 (strain HG52) (HHV-2).